Consider the following 141-residue polypeptide: Sigma factor binding protein 2, chloroplastic (141 aa).

The segment covering 1-20 has biased composition (polar residues); the sequence is MDQSSSTLLINQRKSSSSPT. Positions 1-36 are disordered; the sequence is MDQSSSTLLINQRKSSSSPTRIPPKQKRKSTTTHKP. The transit peptide at 1-38 directs the protein to the chloroplast; sequence MDQSSSTLLINQRKSSSSPTRIPPKQKRKSTTTHKPIK. The Bipartite nuclear localization signal signature appears at 13 to 29; that stretch reads RKSSSSPTRIPPKQKRK. The segment covering 24–36 has biased composition (basic residues); the sequence is PKQKRKSTTTHKP. Positions 55-64 match the VQ motif; sequence FRELVQELTG.

Interacts with sigma factors in chloroplast. Interacts with WRKY33 in the nucleus.

The protein resides in the plastid. It localises to the chloroplast. The protein localises to the nucleus. In terms of biological role, functions as activator of WRKY33 in plant defense against necrotrophic pathogens by stimulating the DNA-binding activity of WRKY33. The chain is Sigma factor binding protein 2, chloroplastic (SIB2) from Arabidopsis thaliana (Mouse-ear cress).